A 476-amino-acid polypeptide reads, in one-letter code: MFAAGLAPFYASNFSLWSAAYCSSAGPGGCSFALDPAAVKKPSFCIADILHAGVGEPGPAAEGLVGASAALTAHLGSVHPHASFQAAARSPLRPTPVVAPSEVPAGFPQRLSPLSAAYHQHLPQQPPTQQQQPQQQPPPPPRAGSLQPPTSGTRVVPHHSGSAPAPSSKDLKFGIDRILSAEFDPKVKEGNTLRDLTSLLTGGRPTGVHLAGLQPSAGQFFASLDPISEASAILSPLSSNPRNSVQHQFQDTFPGPYAVLTKDTMPQTYKRKRSWSRAVFSNLQRKGLEKRFEIQKYVTKPDRKQLAAMLGLTDAQVKVWFQNRRMKWRHSKEAQAQKDKDKEAGEKPSGGVPAEGEREERSPSRSEGEAESESSDSESLDMAPSDTERTEGTERSLHQTTVIKASAAGALITASSSASGSSFSFSSSSSLGSSNGSAGSASSLGSNCSELLPSHQPSVTSGPQSPEIAQVPLAGL.

Disordered regions lie at residues 121-170, 328-401, and 413-476; these read HLPQ…SSKD, WRHS…HQTT, and TASS…LAGL. Over residues 158–168 the composition is skewed to low complexity; it reads HHSGSAPAPSS. The segment at residues 273-332 is a DNA-binding region (homeobox); the sequence is RSWSRAVFSNLQRKGLEKRFEIQKYVTKPDRKQLAAMLGLTDAQVKVWFQNRRMKWRHSK. Basic and acidic residues-rich tracts occupy residues 331-346 and 355-368; these read SKEA…EAGE and EGER…RSEG. A compositionally biased stretch (acidic residues) spans 369 to 379; it reads EAESESSDSES. Positions 386-397 are enriched in basic and acidic residues; it reads DTERTEGTERSL. Residues 413–446 show a composition bias toward low complexity; it reads TASSSASGSSFSFSSSSSLGSSNGSAGSASSLGS. Residues 455–464 are compositionally biased toward polar residues; it reads HQPSVTSGPQ.

It belongs to the H2.0 homeobox family.

It localises to the nucleus. In terms of biological role, transcription factor required for TBX21/T-bet-dependent maturation of Th1 cells as well as maintenance of Th1-specific gene expression. Involved in embryogenesis and hematopoiesis. This Rattus norvegicus (Rat) protein is H2.0-like homeobox protein (Hlx).